Here is a 216-residue protein sequence, read N- to C-terminus: ATP-dependent Clp protease proteolytic subunit (216 aa).

The active-site Nucleophile is serine 101. Histidine 126 is a catalytic residue.

Belongs to the peptidase S14 family. As to quaternary structure, component of the chloroplastic Clp protease core complex.

It is found in the plastid. Its subcellular location is the chloroplast stroma. The catalysed reaction is Hydrolysis of proteins to small peptides in the presence of ATP and magnesium. alpha-casein is the usual test substrate. In the absence of ATP, only oligopeptides shorter than five residues are hydrolyzed (such as succinyl-Leu-Tyr-|-NHMec, and Leu-Tyr-Leu-|-Tyr-Trp, in which cleavage of the -Tyr-|-Leu- and -Tyr-|-Trp bonds also occurs).. Cleaves peptides in various proteins in a process that requires ATP hydrolysis. Has a chymotrypsin-like activity. Plays a major role in the degradation of misfolded proteins. In Triticum aestivum (Wheat), this protein is ATP-dependent Clp protease proteolytic subunit.